The following is an 843-amino-acid chain: Glycogen phosphorylase, brain form (843 aa).

At Ala-2 the chain carries N-acetylalanine. Residue Ser-15 is modified to Phosphoserine; by PHK; in form phosphorylase A. AMP contacts are provided by Asp-43, Tyr-197, and Arg-310. Tyr-197 carries the phosphotyrosine modification. Tyr-473 is subject to Phosphotyrosine. Lys-569 provides a ligand contact to pyridoxal 5'-phosphate. Residues 677-678 (TG) form a pyridoxal 5'-phosphate region. An N6-(pyridoxal phosphate)lysine modification is found at Lys-681.

The protein belongs to the glycogen phosphorylase family. Homodimer. Dimers associate into a tetramer to form the enzymatically active phosphorylase A. The cofactor is pyridoxal 5'-phosphate. Phosphorylation of Ser-15 converts phosphorylase B (unphosphorylated) to phosphorylase A.

It carries out the reaction [(1-&gt;4)-alpha-D-glucosyl](n) + phosphate = [(1-&gt;4)-alpha-D-glucosyl](n-1) + alpha-D-glucose 1-phosphate. Its activity is regulated as follows. Activity of phosphorylase is controlled both by allosteric means (through the non-covalent binding of metabolites) and by covalent modification. Thus AMP allosterically activates, whereas ATP, ADP, and glucose-6-phosphate allosterically inhibit, phosphorylase B. Its function is as follows. Glycogen phosphorylase that regulates glycogen mobilization. Phosphorylase is an important allosteric enzyme in carbohydrate metabolism. Enzymes from different sources differ in their regulatory mechanisms and in their natural substrates. However, all known phosphorylases share catalytic and structural properties. The chain is Glycogen phosphorylase, brain form (PYGB) from Ovis aries (Sheep).